A 493-amino-acid polypeptide reads, in one-letter code: Cysteine--tRNA ligase (493 aa).

Cys31 serves as a coordination point for Zn(2+). Positions 33–43 (PTVYGDAHLGH) match the 'HIGH' region motif. Zn(2+) contacts are provided by Cys226, His251, and Glu255. The 'KMSKS' region signature appears at 283-287 (KMGKS). Lys286 lines the ATP pocket.

This sequence belongs to the class-I aminoacyl-tRNA synthetase family. As to quaternary structure, monomer. Zn(2+) serves as cofactor.

The protein localises to the cytoplasm. The enzyme catalyses tRNA(Cys) + L-cysteine + ATP = L-cysteinyl-tRNA(Cys) + AMP + diphosphate. This chain is Cysteine--tRNA ligase, found in Bacteroides thetaiotaomicron (strain ATCC 29148 / DSM 2079 / JCM 5827 / CCUG 10774 / NCTC 10582 / VPI-5482 / E50).